The following is a 177-amino-acid chain: 3-hydroxydecanoyl-[acyl-carrier-protein] dehydratase (177 aa).

Histidine 76 is a catalytic residue.

This sequence belongs to the thioester dehydratase family. FabA subfamily. Homodimer.

The protein resides in the cytoplasm. The catalysed reaction is a (3R)-hydroxyacyl-[ACP] = a (2E)-enoyl-[ACP] + H2O. The enzyme catalyses (3R)-hydroxydecanoyl-[ACP] = (2E)-decenoyl-[ACP] + H2O. It carries out the reaction (2E)-decenoyl-[ACP] = (3Z)-decenoyl-[ACP]. It participates in lipid metabolism; fatty acid biosynthesis. Necessary for the introduction of cis unsaturation into fatty acids. Catalyzes the dehydration of (3R)-3-hydroxydecanoyl-ACP to E-(2)-decenoyl-ACP and then its isomerization to Z-(3)-decenoyl-ACP. Can catalyze the dehydratase reaction for beta-hydroxyacyl-ACPs with saturated chain lengths up to 16:0, being most active on intermediate chain length. The sequence is that of 3-hydroxydecanoyl-[acyl-carrier-protein] dehydratase from Mannheimia succiniciproducens (strain KCTC 0769BP / MBEL55E).